Reading from the N-terminus, the 468-residue chain is UDP-N-acetylmuramoylalanine--D-glutamate ligase (468 aa).

Gly127–Thr133 serves as a coordination point for ATP.

This sequence belongs to the MurCDEF family.

The protein resides in the cytoplasm. The catalysed reaction is UDP-N-acetyl-alpha-D-muramoyl-L-alanine + D-glutamate + ATP = UDP-N-acetyl-alpha-D-muramoyl-L-alanyl-D-glutamate + ADP + phosphate + H(+). It participates in cell wall biogenesis; peptidoglycan biosynthesis. Functionally, cell wall formation. Catalyzes the addition of glutamate to the nucleotide precursor UDP-N-acetylmuramoyl-L-alanine (UMA). This Prochlorococcus marinus (strain MIT 9312) protein is UDP-N-acetylmuramoylalanine--D-glutamate ligase.